We begin with the raw amino-acid sequence, 107 residues long: MTTETLACTYAALMLSDAGLPTSAENIAAAVKAAGVSVRPTMPIIFARFLEKKSVEALMAAAATQAPTATSAAAAPAAGEASGKAEEKKKEEPEEEGDDDMGFGLFD.

The segment covering 67-82 has biased composition (low complexity); that stretch reads PTATSAAAAPAAGEAS. The tract at residues 67-107 is disordered; the sequence is PTATSAAAAPAAGEASGKAEEKKKEEPEEEGDDDMGFGLFD. Residues 83–92 show a composition bias toward basic and acidic residues; it reads GKAEEKKKEE.

This sequence belongs to the eukaryotic ribosomal protein P1/P2 family. As to quaternary structure, P1 and P2 exist as dimers at the large ribosomal subunit.

In terms of biological role, plays an important role in the elongation step of protein synthesis. This is Large ribosomal subunit protein P1 from Leishmania peruviana.